The chain runs to 122 residues: Large ribosomal subunit protein uL18 (122 aa).

This sequence belongs to the universal ribosomal protein uL18 family. As to quaternary structure, part of the 50S ribosomal subunit; part of the 5S rRNA/L5/L18/L25 subcomplex. Contacts the 5S and 23S rRNAs.

Its function is as follows. This is one of the proteins that bind and probably mediate the attachment of the 5S RNA into the large ribosomal subunit, where it forms part of the central protuberance. The chain is Large ribosomal subunit protein uL18 from Heliobacterium modesticaldum (strain ATCC 51547 / Ice1).